Reading from the N-terminus, the 553-residue chain is Chaperonin GroEL 2 (553 aa).

Residues 29 to 32 (TLGP), 86 to 90 (DGTTT), Gly-414, and Asp-495 contribute to the ATP site.

It belongs to the chaperonin (HSP60) family. As to quaternary structure, forms a cylinder of 14 subunits composed of two heptameric rings stacked back-to-back. Interacts with the co-chaperonin GroES.

Its subcellular location is the cytoplasm. It catalyses the reaction ATP + H2O + a folded polypeptide = ADP + phosphate + an unfolded polypeptide.. Together with its co-chaperonin GroES, plays an essential role in assisting protein folding. The GroEL-GroES system forms a nano-cage that allows encapsulation of the non-native substrate proteins and provides a physical environment optimized to promote and accelerate protein folding. The sequence is that of Chaperonin GroEL 2 from Gloeobacter violaceus (strain ATCC 29082 / PCC 7421).